A 268-amino-acid polypeptide reads, in one-letter code: Phosphatidylglycerol--prolipoprotein diacylglyceryl transferase (268 aa).

The next 7 membrane-spanning stretches (helical) occupy residues 14–34, 60–80, 95–115, 124–144, 176–196, 203–223, and 238–258; these read IIFS…LIGF, LLFN…VLFY, VWEG…AMLV, FWVV…MGRI, SQLY…NWFI, GSVA…VEFF, and ISMG…FIVL. Residue Arg143 participates in a 1,2-diacyl-sn-glycero-3-phospho-(1'-sn-glycerol) binding.

This sequence belongs to the Lgt family.

Its subcellular location is the cell inner membrane. It catalyses the reaction L-cysteinyl-[prolipoprotein] + a 1,2-diacyl-sn-glycero-3-phospho-(1'-sn-glycerol) = an S-1,2-diacyl-sn-glyceryl-L-cysteinyl-[prolipoprotein] + sn-glycerol 1-phosphate + H(+). It functions in the pathway protein modification; lipoprotein biosynthesis (diacylglyceryl transfer). Catalyzes the transfer of the diacylglyceryl group from phosphatidylglycerol to the sulfhydryl group of the N-terminal cysteine of a prolipoprotein, the first step in the formation of mature lipoproteins. In Mannheimia succiniciproducens (strain KCTC 0769BP / MBEL55E), this protein is Phosphatidylglycerol--prolipoprotein diacylglyceryl transferase.